Consider the following 351-residue polypeptide: Biotin synthase (351 aa).

The 228-residue stretch at 42-269 (NEVQVSTLLS…KSHVRLSAGR (228 aa)) folds into the Radical SAM core domain. Positions 57, 61, and 64 each coordinate [4Fe-4S] cluster. 4 residues coordinate [2Fe-2S] cluster: cysteine 101, cysteine 132, cysteine 192, and arginine 264.

This sequence belongs to the radical SAM superfamily. Biotin synthase family. As to quaternary structure, homodimer. [4Fe-4S] cluster serves as cofactor. Requires [2Fe-2S] cluster as cofactor.

It catalyses the reaction (4R,5S)-dethiobiotin + (sulfur carrier)-SH + 2 reduced [2Fe-2S]-[ferredoxin] + 2 S-adenosyl-L-methionine = (sulfur carrier)-H + biotin + 2 5'-deoxyadenosine + 2 L-methionine + 2 oxidized [2Fe-2S]-[ferredoxin]. It participates in cofactor biosynthesis; biotin biosynthesis; biotin from 7,8-diaminononanoate: step 2/2. Functionally, catalyzes the conversion of dethiobiotin (DTB) to biotin by the insertion of a sulfur atom into dethiobiotin via a radical-based mechanism. In Psychromonas ingrahamii (strain DSM 17664 / CCUG 51855 / 37), this protein is Biotin synthase.